Consider the following 254-residue polypeptide: Arginine/ornithine transport ATP-binding protein AotP (254 aa).

The ABC transporter domain maps to L4 to L249. Residue G36–S43 coordinates ATP.

Belongs to the ABC transporter superfamily.

The protein localises to the cell inner membrane. Part of the arginine-inducible binding-protein-dependent transport system for arginine and ornithine. Probably responsible for energy coupling to the transport system. The chain is Arginine/ornithine transport ATP-binding protein AotP (aotP) from Pseudomonas aeruginosa (strain ATCC 15692 / DSM 22644 / CIP 104116 / JCM 14847 / LMG 12228 / 1C / PRS 101 / PAO1).